The chain runs to 208 residues: 3-demethoxyubiquinol 3-hydroxylase (208 aa).

Positions 57, 87, 90, 139, 171, and 174 each coordinate Fe cation.

Belongs to the COQ7 family. Fe cation is required as a cofactor.

The protein localises to the cell membrane. It catalyses the reaction a 5-methoxy-2-methyl-3-(all-trans-polyprenyl)benzene-1,4-diol + AH2 + O2 = a 3-demethylubiquinol + A + H2O. The protein operates within cofactor biosynthesis; ubiquinone biosynthesis. Functionally, catalyzes the hydroxylation of 2-nonaprenyl-3-methyl-6-methoxy-1,4-benzoquinol during ubiquinone biosynthesis. The protein is 3-demethoxyubiquinol 3-hydroxylase of Nitrosospira multiformis (strain ATCC 25196 / NCIMB 11849 / C 71).